The sequence spans 1307 residues: CRISPR-associated endonuclease Cas12a (1307 aa).

The interval 1–35 (MTQFEGFTNLYQVSKTLRFELIPQGKTLKHIQEQG) is WED-I (OBD-I). The interval 36–320 (FIEEDKARND…SDRNTLSFIL (285 aa)) is REC1 (helical-I). 47 to 51 (YKELK) provides a ligand contact to crRNA. A coiled-coil region spans residues 74 to 106 (ENLSAAIDSYRKEKTEETRNALIEEQATYRNAI). CrRNA-binding positions include 175-176 (NR) and 307-310 (KQIL). The interval 321–526 (EEFKSDEEVI…ARNYATKKPY (206 aa)) is WED-II (helical-II). Positions 527–598 (SVEKFKLNFQ…GFDKMYYDYF (72 aa)) are WED-II (OBD-I). Residues 599 to 607 (PDAAKMIPK) constitute a DNA-binding region (PAM-binding on target DNA). The tract at residues 599-718 (PDAAKMIPKC…EYYAELNPLL (120 aa)) is PI (LHD). The tract at residues 719–884 (YHISFQRIAE…ITLNYQAANS (166 aa)) is WED-III (OBD-III). 752-761 (KGHHGKPNLH) contacts crRNA. Positions 780-783 (KLNG) form a DNA-binding region, target DNA. The active-site For pre-crRNA processing is His-800. Position 806–808 (806–808 (MLN)) interacts with crRNA. Residues Lys-809 and Lys-860 each act as for pre-crRNA processing in the active site. Positions 885-940 (PSKFNQRVNAYLKEHPETPIIGIDRGERNLIYITVIDSTGKILEQRSLNTIQQFDY) are ruvC-I. Catalysis depends on Asp-908, which acts as the For DNase activity of RuvC domain. Positions 941–957 (QKKLDNREKERVAARQA) are bridge helix. The target DNA DNA-binding region spans 951 to 968 (RVAARQAWSVVGTIKDLK). Residues 958 to 1066 (WSVVGTIKDL…TQSGFLFYVP (109 aa)) form a ruvC-II region. Glu-993 serves as the catalytic For DNase activity of RuvC domain. The segment at residues 1051–1053 (SFA) is a DNA-binding region (target DNA). The segment at 1067–1262 (APYTSKIDPL…FQNPEWPMDA (196 aa)) is nuclease domain. Catalysis depends on Arg-1226, which acts as the For DNase activity of nuclease domain. Residue Asp-1263 is the For DNase activity of RuvC domain of the active site. Residues 1263 to 1307 (DANGAYHIALKGQLLLNHLKESKDLKLQNGISNQDWLAYIQELRN) are ruvC-III.

The protein belongs to the CRISPR-associated endonuclease Cas12a family. In terms of assembly, monomer. The cofactor is Mg(2+).

The enzyme catalyses Endonucleolytic cleavage to 5'-phosphodinucleotide and 5'-phosphooligonucleotide end-products.. It catalyses the reaction RNA = a 5'-hydroxy-ribonucleotide + n nucleoside-2',3'-cyclophosphates.. Functionally, CRISPR (clustered regularly interspaced short palindromic repeat), is an adaptive immune system that provides protection against mobile genetic elements (viruses, transposable elements and conjugative plasmids). CRISPR clusters contain sequences complementary to antecedent mobile elements and target invading nucleic acids. CRISPR clusters are transcribed and processed into CRISPR RNA (crRNA). Recognizes a short motif in the CRISPR repeat sequences (the 5' PAM or protospacer adjacent motif, TTTN in this organism) to help distinguish self versus nonself, as targets within the bacterial CRISPR locus do not have PAMs. Has dsDNA endonuclease activity, results in staggered 4-base 5' overhangs 19 and 22 bases downstream of the PAM on the non-targeted and targeted strand respectively. Non-target strand cleavage by the RuvC domain is probably a prerequisite of target strand cleavage by the Nuc domain. Protects E.coli against plasmids and bacteriophage M13mp18, phage T4 with hydroxymethyl or unmodified (but not glycosylated) cytosines and to a lesser extent against lambda and VpaE1 phage. In this CRISPR system correct processing of pre-crRNA requires only this protein and the CRISPR locus. This is CRISPR-associated endonuclease Cas12a from Acidaminococcus sp. (strain BV3L6).